The sequence spans 492 residues: MTTTETSLSADTKNGIDFKIADLSLADFGRKELRIAEHEMPGLMSLRREYAEVQPLKGARISGSLHMTVQTAVLIETLTALGAEVRWASCNIFSTQDHAAAAVVVGPHGTPEEPKGVPVFAWKGESLEEYWWCAEQMLTWPDSDKPANMILDDGGDATMLVLRGMQYEKAGVVPPAEEDDSAEWKVFLGLLRSRFETDKGKWTKIAESVKGVTEETTTGVLRLYQFAEAGDLAFPAINVNDSVTKSKFDNKYGTRHSLIDGINRGTDALIGGKKVLICGYGDVGKGCAEAMKGQGARVSVTEIDPINALQAMMEGFDVVTVEDAIGDADIVVTSTGNKDIIMLEHIKAMKDHSILGNIGHFDNEIDMAGLERSGATRTNIKPQVDLWTFGDTGRSIIVLSEGRLLNLGNATGHPSFVMSNSFANQTIAQIELWTKNDEYDNEVYRLPKHLDEKVARIHVEALGGRLTKLTKDQAEYLGVDVEGPYKPDHYRY.

The substrate site is built by threonine 68, aspartate 153, and glutamate 215. 216–218 (TTT) is a binding site for NAD(+). Substrate contacts are provided by lysine 245 and aspartate 249. NAD(+)-binding positions include asparagine 250, 279 to 284 (GYGDVG), glutamate 302, asparagine 337, 358 to 360 (IGH), and asparagine 406.

Belongs to the adenosylhomocysteinase family. NAD(+) serves as cofactor.

It localises to the cytoplasm. The enzyme catalyses S-adenosyl-L-homocysteine + H2O = L-homocysteine + adenosine. It functions in the pathway amino-acid biosynthesis; L-homocysteine biosynthesis; L-homocysteine from S-adenosyl-L-homocysteine: step 1/1. Its function is as follows. May play a key role in the regulation of the intracellular concentration of adenosylhomocysteine. The sequence is that of Adenosylhomocysteinase from Mycobacterium ulcerans (strain Agy99).